Consider the following 161-residue polypeptide: Cytochrome c-type biogenesis protein CcmE (161 aa).

The Cytoplasmic segment spans residues 1–8; the sequence is MNPRRQKR. The chain crosses the membrane as a helical; Signal-anchor for type II membrane protein span at residues 9–29; sequence LGIILAILIGVSATIGLMIYA. The Periplasmic portion of the chain corresponds to 30–161; it reads LNQNMDLFYT…SEEQKQGSGQ (132 aa). Residues H129 and Y133 each coordinate heme.

This sequence belongs to the CcmE/CycJ family.

It is found in the cell inner membrane. Its function is as follows. Heme chaperone required for the biogenesis of c-type cytochromes. Transiently binds heme delivered by CcmC and transfers the heme to apo-cytochromes in a process facilitated by CcmF and CcmH. The protein is Cytochrome c-type biogenesis protein CcmE of Vibrio vulnificus (strain CMCP6).